Here is a 361-residue protein sequence, read N- to C-terminus: MVAATEFPVSPMLTDAARRNRLWVRIWLYCVIVTLFAIVLVGGATRLTDSGLSITEWKPIHGVIPPLGEAEWAEEFARYQQIPEYEQINKGMSLEEFKGIFWWEWAHRLLARGVGFVFALPLLFFWVTGRLERHLKPKLLGILALGGLQGAVGWWMVASGLSERVDVSQYRLATHLTIACLIFNATMAVARGLAPHSGKPALDSTRRFAFWLVVAVLVQIYLGGLVAGLDAGMAYNTWPLMDGALVPQGLFEHRPAWVNLFENPKTVQFVHRLGAYVVLLLALWHAIATLRAEPDSTHARRAVLLFLLVCVQAAIGIATLLMVVPMDVALAHQAMALIVLGFATAHWRATRGAYPFMQAAA.

8 helical membrane-spanning segments follow: residues Leu-22–Gly-42, Leu-109–Gly-129, Leu-139–Ser-159, His-175–Pro-195, Phe-208–Gly-228, Phe-269–Thr-289, Val-303–Val-323, and Val-324–Thr-344. His-271 serves as a coordination point for heme. His-332 lines the heme pocket.

This sequence belongs to the COX15/CtaA family. Type 2 subfamily. As to quaternary structure, interacts with CtaB. It depends on heme b as a cofactor.

It localises to the cell membrane. The catalysed reaction is Fe(II)-heme o + 2 A + H2O = Fe(II)-heme a + 2 AH2. Its pathway is porphyrin-containing compound metabolism; heme A biosynthesis; heme A from heme O: step 1/1. Its function is as follows. Catalyzes the conversion of heme O to heme A by two successive hydroxylations of the methyl group at C8. The first hydroxylation forms heme I, the second hydroxylation results in an unstable dihydroxymethyl group, which spontaneously dehydrates, resulting in the formyl group of heme A. This chain is Heme A synthase, found in Chelativorans sp. (strain BNC1).